Consider the following 215-residue polypeptide: Pyrrolidone-carboxylate peptidase (215 aa).

Active-site residues include glutamate 80, cysteine 143, and histidine 167.

The protein belongs to the peptidase C15 family. Homotetramer.

It is found in the cytoplasm. The enzyme catalyses Release of an N-terminal pyroglutamyl group from a polypeptide, the second amino acid generally not being Pro.. Functionally, removes 5-oxoproline from various penultimate amino acid residues except L-proline. The sequence is that of Pyrrolidone-carboxylate peptidase from Bacillus cereus (strain ATCC 14579 / DSM 31 / CCUG 7414 / JCM 2152 / NBRC 15305 / NCIMB 9373 / NCTC 2599 / NRRL B-3711).